We begin with the raw amino-acid sequence, 258 residues long: Snake venom serine protease catroxase-2 (258 aa).

The first 18 residues, 1-18 (MVLIRVLANLLILQLSYA), serve as a signal peptide directing secretion. A propeptide spanning residues 19-24 (QKSSEL) is cleaved from the precursor. In terms of domain architecture, Peptidase S1 spans 25–249 (VVGGDECNIN…YNDWIQSIIA (225 aa)). Cystine bridges form between Cys31–Cys163, Cys50–Cys66, Cys98–Cys256, Cys142–Cys210, Cys174–Cys189, and Cys200–Cys225. The N-linked (GlcNAc...) asparagine glycan is linked to Asn44. Catalysis depends on charge relay system residues His65 and Asp110. Catalysis depends on Ser204, which acts as the Charge relay system.

This sequence belongs to the peptidase S1 family. Snake venom subfamily. As to quaternary structure, monomer. In terms of tissue distribution, expressed by the venom gland.

It is found in the secreted. Its function is as follows. Snake venom serine protease that may act in the hemostasis system of the prey. This Crotalus atrox (Western diamondback rattlesnake) protein is Snake venom serine protease catroxase-2.